The chain runs to 230 residues: MARYDARLRGIGKAHACSAFAGHDFEGRNIMKTPWKFLAQLASRRRSASVQENFIAPDTDPEVIESETENKSPLPFDKPTQASGTPDHDSAVDRGSMLSDQLESDPNPLQEMNLTADIQEPGTPARSETKQSDAAGKRLGPQSQTSANSQKKPEIRCRERSKNARAEGVAQSAVATNEAETVQTSSSGDPFFNEVAILDEEIKELRRLLAQKLYLQNAQLKKMLERFDAS.

The N-terminal stretch at 1–21 (MARYDARLRGIGKAHACSAFA) is a signal peptide. Positions 47–190 (SASVQENFIA…TVQTSSSGDP (144 aa)) are disordered. A compositionally biased stretch (polar residues) spans 141–150 (PQSQTSANSQ). The segment covering 151-165 (KKPEIRCRERSKNAR) has biased composition (basic and acidic residues). Residues 173-188 (AVATNEAETVQTSSSG) show a composition bias toward polar residues.

It to R.meliloti RA0936 and y4aO.

This is an uncharacterized protein from Sinorhizobium fredii (strain NBRC 101917 / NGR234).